The chain runs to 331 residues: Taste receptor type 2 member 38 (331 aa).

The Extracellular segment spans residues 1 to 17 (MLTLTPVLTVSYEAKIS). Residues 18-38 (FLFLSVVEFAVGIMANAFIVL) traverse the membrane as a helical segment. The Cytoplasmic portion of the chain corresponds to 39-54 (VNFWDMVKKQPLNNCD). The helical transmembrane segment at 55-75 (IALLCLSITRLFLQGLLLLDA) threads the bilayer. At 76 to 94 (IQLACFQQMKDPLSHNYQA) the chain is on the extracellular side. Residues 95–115 (ILTLWMSANQVSLWLAACLSL) form a helical membrane-spanning segment. Topologically, residues 116-142 (LYCAKIVRFSHTFPLHLASWVSRRFLQ) are cytoplasmic. The chain crosses the membrane as a helical span at residues 143–163 (MLLVALLFSGVCTALCLWDFF). Topologically, residues 164-198 (SRSHTVVTSMLHMNNTEFNLQIEKLNFFYSFVFCN) are extracellular. An N-linked (GlcNAc...) asparagine glycan is attached at N177. A helical transmembrane segment spans residues 199–219 (VGSVPPSLVFLISSGVLVISL). Residues 220–243 (GNHMRTMKSQTRGSRDPSLEAHVR) are Cytoplasmic-facing. The helical transmembrane segment at 244 to 264 (AIIFLVSFLCFYVVSFCAALI) threads the bilayer. The Extracellular portion of the chain corresponds to 265–276 (SIPLLVLWHNKG). Residues 277-297 (GVMVCIGMMAACPSGHAAILI) form a helical membrane-spanning segment. Residues 298–331 (SGNAKLKKVIVTILFWFQSRQKVRRVHKVLPRIL) lie on the Cytoplasmic side of the membrane.

It belongs to the G-protein coupled receptor T2R family. In terms of tissue distribution, expressed in tongue, stomach and duodenum.

The protein resides in the membrane. Its function is as follows. Putative taste receptor which may play a role in the perception of bitterness. This Rattus norvegicus (Rat) protein is Taste receptor type 2 member 38 (Tas2r38).